A 102-amino-acid polypeptide reads, in one-letter code: Small ribosomal subunit protein uS10 (102 aa).

The protein belongs to the universal ribosomal protein uS10 family. As to quaternary structure, part of the 30S ribosomal subunit.

Its function is as follows. Involved in the binding of tRNA to the ribosomes. In Pelobacter propionicus (strain DSM 2379 / NBRC 103807 / OttBd1), this protein is Small ribosomal subunit protein uS10.